A 236-amino-acid chain; its full sequence is Ubiquinone biosynthesis O-methyltransferase (236 aa).

S-adenosyl-L-methionine-binding residues include arginine 40, glycine 59, aspartate 80, and leucine 124.

This sequence belongs to the methyltransferase superfamily. UbiG/COQ3 family.

It carries out the reaction a 3-demethylubiquinol + S-adenosyl-L-methionine = a ubiquinol + S-adenosyl-L-homocysteine + H(+). The catalysed reaction is a 3-(all-trans-polyprenyl)benzene-1,2-diol + S-adenosyl-L-methionine = a 2-methoxy-6-(all-trans-polyprenyl)phenol + S-adenosyl-L-homocysteine + H(+). The protein operates within cofactor biosynthesis; ubiquinone biosynthesis. Functionally, O-methyltransferase that catalyzes the 2 O-methylation steps in the ubiquinone biosynthetic pathway. This is Ubiquinone biosynthesis O-methyltransferase from Nitrosococcus oceani (strain ATCC 19707 / BCRC 17464 / JCM 30415 / NCIMB 11848 / C-107).